A 248-amino-acid polypeptide reads, in one-letter code: Probable transcriptional regulatory protein Desal_2886 (248 aa).

A disordered region spans residues 1–21; the sequence is MAGHSKWANIQHRKGRQDAKR.

Belongs to the TACO1 family.

It is found in the cytoplasm. The sequence is that of Probable transcriptional regulatory protein Desal_2886 from Maridesulfovibrio salexigens (strain ATCC 14822 / DSM 2638 / NCIMB 8403 / VKM B-1763) (Desulfovibrio salexigens).